Consider the following 377-residue polypeptide: Probable trehalose-phosphate phosphatase G (377 aa).

The disordered stretch occupies residues 1–20; sequence MDLNINKTTPVLSDPTTPVS.

It belongs to the trehalose phosphatase family. A divalent metal cation serves as cofactor.

The enzyme catalyses alpha,alpha-trehalose 6-phosphate + H2O = alpha,alpha-trehalose + phosphate. It functions in the pathway glycan biosynthesis; trehalose biosynthesis. Removes the phosphate from trehalose 6-phosphate to produce free trehalose. Trehalose accumulation in plant may improve abiotic stress tolerance. The sequence is that of Probable trehalose-phosphate phosphatase G (TPPG) from Arabidopsis thaliana (Mouse-ear cress).